A 787-amino-acid chain; its full sequence is ABC transporter G family member 5 (787 aa).

The span at 1 to 17 (MSRFVDKLPLFDRRPSP) shows a compositional bias: basic and acidic residues. Disordered stretches follow at residues 1-25 (MSRF…EGLP) and 71-116 (NDAR…EGQP). Positions 74–85 (RSGSSTPISSPR) are enriched in polar residues. The ABC transporter domain maps to 121 to 382 (LKFTDLTYSV…FLDFGKPIPD (262 aa)). 175–182 (GASGSGKS) serves as a coordination point for ATP. The region spanning 484-691 (GVLTRRAFIN…PYEAVMQNEF (208 aa)) is the ABC transmembrane type-2 domain. The next 8 membrane-spanning stretches (helical) occupy residues 500 to 520 (VFII…TIFW), 535 to 555 (FFAI…PVFL), 576 to 596 (VLSH…AFAL), 599 to 619 (FFSV…AIVL), 620 to 640 (ASFW…THVM), 641 to 661 (LGFP…GFFI), 728 to 745 (SLGV…GPDF), and 760 to 780 (LWIT…SLLL).

The protein belongs to the ABC transporter superfamily. ABCG family. Eye pigment precursor importer (TC 3.A.1.204) subfamily. Expressed in the crown root primordia, endodermis, pericycle and stele in the root, in leaf primordia of main and axillary shoots, and in the vascular cells and leaf epidermis of older leaves.

It is found in the cell membrane. Functionally, essential transporter for growth and development under abiotic stress. Mediates shoot branching by promoting the outgrowth of lateral shoots. Required for salt tolerance via Na/K homeostasis, at least partly by regulating SKC1/OsHKT1;5. Necessary for hypodermal suberization of roots, which contributes to formation of the apoplastic barrier. The chain is ABC transporter G family member 5 from Oryza sativa subsp. japonica (Rice).